Here is a 142-residue protein sequence, read N- to C-terminus: MSMKYLMLLFAAMIIRSFADSGNAIETTLPEITNATTDIPAIRLCGPEGDGYCLHGDCIHARDIDGMYCRCSHGYTGIRCQHVVLVDYQRSENPNTTTSYIPSPGIMLVLVGIIIIITCCLLSVYRFTRRTNKLPLQDMVVP.

The first 18 residues, 1–18 (MSMKYLMLLFAAMIIRSF), serve as a signal peptide directing secretion. The Extracellular segment spans residues 19–100 (ADSGNAIETT…SENPNTTTSY (82 aa)). N-linked (GlcNAc...) asparagine; by host glycosylation is present at asparagine 34. The EGF-like domain maps to 41-81 (AIRLCGPEGDGYCLHGDCIHARDIDGMYCRCSHGYTGIRCQ). Cystine bridges form between cysteine 45–cysteine 58, cysteine 53–cysteine 69, and cysteine 71–cysteine 80. N-linked (GlcNAc...) asparagine; by host glycosylation occurs at asparagine 95. A helical transmembrane segment spans residues 101–121 (IPSPGIMLVLVGIIIIITCCL). Residues 122-142 (LSVYRFTRRTNKLPLQDMVVP) are Cytoplasmic-facing.

Belongs to the orthopoxvirus OPG019 family. As to quaternary structure, vaccinia growth factor interacts with host EGFR and promotes EGFR dimerization.

The protein localises to the host membrane. It localises to the secreted. Functionally, stimulates cellular proliferation (hyperplasia)and mobility around infected cells to promote rapid and efficient spread of infection. This effect is beneficial for virus replication in vivo, because poxviruses replicate possibly better in proliferating cells than in quiescent cells. Acts by binding host EGFR, inducing its dimerization, autophosphorylation and leading to activation of several cellular pathways regulating cell proliferation or cell survival. The activation by host EGFR of mitogen activated protein kinases (MAPK) and extracellular-signal regulated kinases (ERK) are essential for the positive effect of vaccinia growth factor on poxvirus virulence in vivo. The sequence is that of Pro-vaccinia growth factor (OPG019) from Vaccinia virus (strain Copenhagen) (VACV).